Here is a 213-residue protein sequence, read N- to C-terminus: uncharacterized protein (213 aa).

An N-terminal signal peptide occupies residues 1-21; that stretch reads MKKILFLTVICFCLSSIKAYA.

This is an uncharacterized protein from Rickettsia prowazekii (strain Madrid E).